Reading from the N-terminus, the 2149-residue chain is Serine/threonine-protein kinase WNK2 (2149 aa).

The segment covering 1-10 (MDGDGGRRDA) has biased composition (basic and acidic residues). Disordered stretches follow at residues 1-75 (MDGD…QRRV) and 87-183 (ERAR…EDDL). Omega-N-methylarginine occurs at positions 19 and 30. Serine 45 is subject to Phosphoserine. Pro residues predominate over residues 95–114 (APAPAAPAAPPGSPSVPSDP). Residues 161–172 (AKPEPGRARKDE) show a composition bias toward basic and acidic residues. The segment covering 173–182 (PEEEEDDEDD) has biased composition (acidic residues). One can recognise a Protein kinase domain in the interval 195 to 453 (LKFDIELGRG…IKDLLSHAFF (259 aa)). Residues serine 205, 275-278 (TELM), and lysine 325 each bind ATP. The active-site Proton acceptor is the aspartate 342. 2 positions are modified to phosphoserine; by autocatalysis: serine 352 and serine 356. Serine 560 is modified (phosphoserine). Disordered stretches follow at residues 578–630 (HAQS…DSQS), 703–728 (SMSF…APPV), and 1067–1133 (QEEQ…ERAS). The span at 605–625 (ASVTSLASDSTFDSGQGSTVY) shows a compositional bias: polar residues. Residues 709 to 728 (VLPPPSTPVPTGPSQPAPPV) are compositionally biased toward pro residues. A compositionally biased stretch (polar residues) spans 1081–1092 (QSSESFGGSDVT). Serine 1098 bears the Phosphoserine mark. Basic residues predominate over residues 1115 to 1126 (ARKHHRRSTRAR). Serine 1210 is modified (phosphoserine). Disordered stretches follow at residues 1211–1234 (EDTD…CGLA) and 1270–1502 (PATD…GFVD). Low complexity-rich tracts occupy residues 1275–1292 (SESS…EASQ) and 1317–1353 (SQAG…STVP). Positions 1386 to 1400 (RSAQCTAQPLSTGQG) are enriched in polar residues. Positions 1470–1485 (LPSPPLGPTAPPPPPS) are enriched in pro residues. Residues serine 1507, serine 1566, and serine 1594 each carry the phosphoserine modification. 2 disordered regions span residues 1521 to 1727 (VPTS…PSSP) and 1739 to 1778 (ASSI…GGVA). Over residues 1553-1567 (SDKTPSLTQQTQPSL) the composition is skewed to polar residues. A compositionally biased stretch (low complexity) spans 1587-1597 (SSPMTAESSSS). A compositionally biased stretch (polar residues) spans 1610-1629 (ASDSSTAPSVPQDASGSSVP). Phosphoserine occurs at positions 1725, 1726, 1770, and 1797. Residues 1916-1928 (ASSTGHLSDSSRG) are compositionally biased toward polar residues. Residues 1916-1947 (ASSTGHLSDSSRGPPTKDPRGTKAVQTQQPCS) form a disordered region. Phosphoserine is present on serine 1962. The span at 2018–2031 (SSLYDSPGSSTSSL) shows a compositional bias: polar residues. Disordered regions lie at residues 2018 to 2044 (SSLY…PTLH) and 2122 to 2149 (GPLS…EKPD). The segment covering 2122–2135 (GPLSTTATPGATPA) has biased composition (low complexity).

Belongs to the protein kinase superfamily. Ser/Thr protein kinase family. WNK subfamily. As to quaternary structure, forms a complex with the phosphorylated form of STK39 in the brain. It depends on Mg(2+) as a cofactor. Post-translationally, autophosphorylated. Autophosphorylation at Ser-352 and Ser-356 promotes its activity. In terms of tissue distribution, brain and heart.

Its subcellular location is the cytoplasm. The protein localises to the cell membrane. It catalyses the reaction L-seryl-[protein] + ATP = O-phospho-L-seryl-[protein] + ADP + H(+). It carries out the reaction L-threonyl-[protein] + ATP = O-phospho-L-threonyl-[protein] + ADP + H(+). With respect to regulation, activation requires autophosphorylation of Ser-356 and, to a lower extent, Ser-352. In terms of biological role, serine/threonine-protein kinase component of the WNK2-SPAK/OSR1 kinase cascade, which plays an important role in the regulation of electrolyte homeostasis, cell signaling, survival, and proliferation. The WNK2-SPAK/OSR1 kinase cascade is composed of WNK2, which mediates phosphorylation and activation of downstream kinases OXSR1/OSR1 and STK39/SPAK. Following activation, OXSR1/OSR1 and STK39/SPAK catalyze phosphorylation of ion cotransporters, regulating their activity. Acts as an activator and inhibitor of sodium-coupled chloride cotransporters and potassium-coupled chloride cotransporters respectively. Activates SLC12A2, SCNN1A, SCNN1B, SCNN1D and SGK1 and inhibits SLC12A5. Negatively regulates the EGF-induced activation of the ERK/MAPK-pathway and the downstream cell cycle progression. Affects MAPK3/MAPK1 activity by modulating the activity of MAP2K1 and this modulation depends on phosphorylation of MAP2K1 by PAK1. WNK2 acts by interfering with the activity of PAK1 by controlling the balance of the activity of upstream regulators of PAK1 activity, RHOA and RAC1, which display reciprocal activity. This chain is Serine/threonine-protein kinase WNK2, found in Mus musculus (Mouse).